The following is a 303-amino-acid chain: Putative deoxyribose-phosphate aldolase (303 aa).

Residue aspartate 157 is the Proton donor/acceptor of the active site. Lysine 220 acts as the Schiff-base intermediate with acetaldehyde in catalysis. Lysine 256 (proton donor/acceptor) is an active-site residue.

The protein belongs to the DeoC/FbaB aldolase family. DeoC type 2 subfamily.

It catalyses the reaction 2-deoxy-D-ribose 5-phosphate = D-glyceraldehyde 3-phosphate + acetaldehyde. Its pathway is carbohydrate degradation; 2-deoxy-D-ribose 1-phosphate degradation; D-glyceraldehyde 3-phosphate and acetaldehyde from 2-deoxy-alpha-D-ribose 1-phosphate: step 2/2. Catalyzes a reversible aldol reaction between acetaldehyde and D-glyceraldehyde 3-phosphate to generate 2-deoxy-D-ribose 5-phosphate. This Caenorhabditis elegans protein is Putative deoxyribose-phosphate aldolase.